The sequence spans 442 residues: UDP-N-acetylmuramoylalanine--D-glutamate ligase (442 aa).

This sequence belongs to the MurCDEF family.

The protein localises to the cytoplasm. The catalysed reaction is UDP-N-acetyl-alpha-D-muramoyl-L-alanine + D-glutamate + ATP = UDP-N-acetyl-alpha-D-muramoyl-L-alanyl-D-glutamate + ADP + phosphate + H(+). The protein operates within cell wall biogenesis; peptidoglycan biosynthesis. Its function is as follows. Cell wall formation. Catalyzes the addition of glutamate to the nucleotide precursor UDP-N-acetylmuramoyl-L-alanine (UMA). The chain is UDP-N-acetylmuramoylalanine--D-glutamate ligase from Buchnera aphidicola subsp. Baizongia pistaciae (strain Bp).